Here is a 146-residue protein sequence, read N- to C-terminus: U-scoloptoxin(16)-Er1a (146 aa).

Positions 1–26 are cleaved as a signal peptide; it reads MNTVSVVQFLAVGCAVFVLYGRGVFA.

Belongs to the scoloptoxin-16 family. In terms of processing, contains 4 disulfide bonds. Expressed by the venom gland.

The protein localises to the secreted. This Ethmostigmus rubripes (Giant centipede) protein is U-scoloptoxin(16)-Er1a.